The chain runs to 254 residues: Imidazole glycerol phosphate synthase subunit HisF (254 aa).

Catalysis depends on residues Asp12 and Asp131.

The protein belongs to the HisA/HisF family. As to quaternary structure, heterodimer of HisH and HisF.

Its subcellular location is the cytoplasm. The enzyme catalyses 5-[(5-phospho-1-deoxy-D-ribulos-1-ylimino)methylamino]-1-(5-phospho-beta-D-ribosyl)imidazole-4-carboxamide + L-glutamine = D-erythro-1-(imidazol-4-yl)glycerol 3-phosphate + 5-amino-1-(5-phospho-beta-D-ribosyl)imidazole-4-carboxamide + L-glutamate + H(+). It participates in amino-acid biosynthesis; L-histidine biosynthesis; L-histidine from 5-phospho-alpha-D-ribose 1-diphosphate: step 5/9. Its function is as follows. IGPS catalyzes the conversion of PRFAR and glutamine to IGP, AICAR and glutamate. The HisF subunit catalyzes the cyclization activity that produces IGP and AICAR from PRFAR using the ammonia provided by the HisH subunit. This chain is Imidazole glycerol phosphate synthase subunit HisF, found in Herminiimonas arsenicoxydans.